An 84-amino-acid chain; its full sequence is Putative glutaredoxin MT3292 (84 aa).

The region spanning 1–84 (MITAALTIYT…VKAKLVKIAG (84 aa)) is the Glutaredoxin domain.

The chain is Putative glutaredoxin MT3292 from Mycobacterium tuberculosis (strain CDC 1551 / Oshkosh).